We begin with the raw amino-acid sequence, 484 residues long: UDP-N-acetylmuramoyl-L-alanyl-D-glutamate--2,6-diaminopimelate ligase (484 aa).

An ATP-binding site is contributed by 110-116 (GTNGKTT). Residues 152–153 (TT), S179, and R187 contribute to the UDP-N-acetyl-alpha-D-muramoyl-L-alanyl-D-glutamate site. Position 219 is an N6-carboxylysine (K219). Meso-2,6-diaminopimelate contacts are provided by residues R381, 405-408 (DNPR), G455, and E459. Positions 405–408 (DNPR) match the Meso-diaminopimelate recognition motif motif.

It belongs to the MurCDEF family. MurE subfamily. The cofactor is Mg(2+). Post-translationally, carboxylation is probably crucial for Mg(2+) binding and, consequently, for the gamma-phosphate positioning of ATP.

The protein localises to the cytoplasm. The enzyme catalyses UDP-N-acetyl-alpha-D-muramoyl-L-alanyl-D-glutamate + meso-2,6-diaminopimelate + ATP = UDP-N-acetyl-alpha-D-muramoyl-L-alanyl-gamma-D-glutamyl-meso-2,6-diaminopimelate + ADP + phosphate + H(+). Its pathway is cell wall biogenesis; peptidoglycan biosynthesis. Its function is as follows. Catalyzes the addition of meso-diaminopimelic acid to the nucleotide precursor UDP-N-acetylmuramoyl-L-alanyl-D-glutamate (UMAG) in the biosynthesis of bacterial cell-wall peptidoglycan. The chain is UDP-N-acetylmuramoyl-L-alanyl-D-glutamate--2,6-diaminopimelate ligase from Clostridium perfringens (strain 13 / Type A).